We begin with the raw amino-acid sequence, 341 residues long: Dihydroorotate dehydrogenase (quinone) (341 aa).

Residues 59-63 (AGLDK) and Thr83 contribute to the FMN site. Position 63 (Lys63) interacts with substrate. 108–112 (NRMGF) is a substrate binding site. FMN is bound by residues Asn136 and Asn169. A substrate-binding site is contributed by Asn169. Catalysis depends on Ser172, which acts as the Nucleophile. Substrate is bound at residue Asn174. 2 residues coordinate FMN: Lys214 and Thr242. Substrate is bound at residue 243-244 (NT). Residues Gly265, Gly294, and 315-316 (YS) each bind FMN.

The protein belongs to the dihydroorotate dehydrogenase family. Type 2 subfamily. Monomer. Requires FMN as cofactor.

It is found in the cell membrane. It catalyses the reaction (S)-dihydroorotate + a quinone = orotate + a quinol. Its pathway is pyrimidine metabolism; UMP biosynthesis via de novo pathway; orotate from (S)-dihydroorotate (quinone route): step 1/1. Functionally, catalyzes the conversion of dihydroorotate to orotate with quinone as electron acceptor. The polypeptide is Dihydroorotate dehydrogenase (quinone) (Neisseria meningitidis serogroup C (strain 053442)).